A 120-amino-acid polypeptide reads, in one-letter code: Large ribosomal subunit protein uL18 (120 aa).

This sequence belongs to the universal ribosomal protein uL18 family. As to quaternary structure, part of the 50S ribosomal subunit; part of the 5S rRNA/L5/L18/L25 subcomplex. Contacts the 5S and 23S rRNAs.

Functionally, this is one of the proteins that bind and probably mediate the attachment of the 5S RNA into the large ribosomal subunit, where it forms part of the central protuberance. The protein is Large ribosomal subunit protein uL18 of Brucella anthropi (strain ATCC 49188 / DSM 6882 / CCUG 24695 / JCM 21032 / LMG 3331 / NBRC 15819 / NCTC 12168 / Alc 37) (Ochrobactrum anthropi).